Reading from the N-terminus, the 241-residue chain is Uridylate kinase (241 aa).

15–18 (KMSG) lines the ATP pocket. Residue glycine 57 coordinates UMP. The ATP site is built by glycine 58 and arginine 62. Residues aspartate 77 and 138-145 (TGNPFFTT) each bind UMP. ATP-binding residues include threonine 165, tyrosine 171, and aspartate 174.

The protein belongs to the UMP kinase family. As to quaternary structure, homohexamer.

It localises to the cytoplasm. It catalyses the reaction UMP + ATP = UDP + ADP. It participates in pyrimidine metabolism; CTP biosynthesis via de novo pathway; UDP from UMP (UMPK route): step 1/1. With respect to regulation, inhibited by UTP. Its function is as follows. Catalyzes the reversible phosphorylation of UMP to UDP. This Dichelobacter nodosus (strain VCS1703A) protein is Uridylate kinase.